A 108-amino-acid chain; its full sequence is Small ribosomal subunit protein eS25B (108 aa).

The segment covering 1–20 (MPPKQQLSKAAKAAAALAGG) has biased composition (low complexity). The tract at residues 1-30 (MPPKQQLSKAAKAAAALAGGKKSKKKWSKK) is disordered. The residue at position 2 (Pro2) is a N,N-dimethylproline; by NTM1. Residues 21-30 (KKSKKKWSKK) show a composition bias toward basic residues.

It belongs to the eukaryotic ribosomal protein eS25 family. Component of the small ribosomal subunit (SSU). Mature yeast ribosomes consist of a small (40S) and a large (60S) subunit. The 40S small subunit contains 1 molecule of ribosomal RNA (18S rRNA) and 33 different proteins (encoded by 57 genes). The large 60S subunit contains 3 rRNA molecules (25S, 5.8S and 5S rRNA) and 46 different proteins (encoded by 81 genes).

Its subcellular location is the cytoplasm. Functionally, component of the ribosome, a large ribonucleoprotein complex responsible for the synthesis of proteins in the cell. The small ribosomal subunit (SSU) binds messenger RNAs (mRNAs) and translates the encoded message by selecting cognate aminoacyl-transfer RNA (tRNA) molecules. The large subunit (LSU) contains the ribosomal catalytic site termed the peptidyl transferase center (PTC), which catalyzes the formation of peptide bonds, thereby polymerizing the amino acids delivered by tRNAs into a polypeptide chain. The nascent polypeptides leave the ribosome through a tunnel in the LSU and interact with protein factors that function in enzymatic processing, targeting, and the membrane insertion of nascent chains at the exit of the ribosomal tunnel. The chain is Small ribosomal subunit protein eS25B from Saccharomyces cerevisiae (strain ATCC 204508 / S288c) (Baker's yeast).